A 706-amino-acid polypeptide reads, in one-letter code: ATP-dependent zinc metalloprotease FtsH (706 aa).

The span at 1-17 (MAKNSLKPSNPYNSEPE) shows a compositional bias: polar residues. Residues 1–20 (MAKNSLKPSNPYNSEPETPQ) are disordered. At 1–24 (MAKNSLKPSNPYNSEPETPQPRPK) the chain is on the cytoplasmic side. A helical membrane pass occupies residues 25–45 (LPMIYYVVVIALLIGLQLAFF). The Periplasmic segment spans residues 46–142 (WSGSSREIPY…RYEGSPGTTW (97 aa)). The segment at 88–111 (GLPKQEEGNDTTRKLLPGAKTPEN) is disordered. The segment covering 91–100 (KQEEGNDTTR) has biased composition (basic and acidic residues). The chain crosses the membrane as a helical span at residues 143–163 (ISELIQWVLPFALLFGLYFFI). Residues 164–706 (FRRMGAGGPG…LRQSRNVSDN (543 aa)) lie on the Cytoplasmic side of the membrane. Position 239 to 246 (239 to 246 (GPPGTGKT)) interacts with ATP. H462 lines the Zn(2+) pocket. The active site involves E463. Residues H466 and D539 each contribute to the Zn(2+) site. Positions 641–681 (RPGGQEEDSGEVDCSKKSAENGMVAHEPETTADAESTEKVG) are disordered.

This sequence in the central section; belongs to the AAA ATPase family. It in the C-terminal section; belongs to the peptidase M41 family. As to quaternary structure, homohexamer. Zn(2+) serves as cofactor.

It localises to the cell inner membrane. Acts as a processive, ATP-dependent zinc metallopeptidase for both cytoplasmic and membrane proteins. Plays a role in the quality control of integral membrane proteins. The chain is ATP-dependent zinc metalloprotease FtsH from Chlorobium luteolum (strain DSM 273 / BCRC 81028 / 2530) (Pelodictyon luteolum).